A 198-amino-acid chain; its full sequence is NADH-quinone oxidoreductase subunit B (198 aa).

Residues 1-20 (MGLNPTQVSTSGSPQVSQPA) show a composition bias toward polar residues. A disordered region spans residues 1–29 (MGLNPTQVSTSGSPQVSQPATGVLDPRTG). Residues cysteine 77, cysteine 78, cysteine 142, and cysteine 172 each contribute to the [4Fe-4S] cluster site.

The protein belongs to the complex I 20 kDa subunit family. In terms of assembly, NDH-1 is composed of 14 different subunits. Subunits NuoB, C, D, E, F, and G constitute the peripheral sector of the complex. [4Fe-4S] cluster is required as a cofactor.

Its subcellular location is the cell inner membrane. The enzyme catalyses a quinone + NADH + 5 H(+)(in) = a quinol + NAD(+) + 4 H(+)(out). Functionally, NDH-1 shuttles electrons from NADH, via FMN and iron-sulfur (Fe-S) centers, to quinones in the respiratory chain. The immediate electron acceptor for the enzyme in this species is believed to be ubiquinone. Couples the redox reaction to proton translocation (for every two electrons transferred, four hydrogen ions are translocated across the cytoplasmic membrane), and thus conserves the redox energy in a proton gradient. This chain is NADH-quinone oxidoreductase subunit B, found in Afipia carboxidovorans (strain ATCC 49405 / DSM 1227 / KCTC 32145 / OM5) (Oligotropha carboxidovorans).